A 1068-amino-acid chain; its full sequence is Carbamoyl phosphate synthase large chain (1068 aa).

Positions 1-401 are carboxyphosphate synthetic domain; sequence MPLNKDIKKV…AFLKGTRSLE (401 aa). Residues Arg129, Arg169, Gly175, Gly176, Lys208, Val210, Glu215, Gly241, Ile242, His243, Gln284, and Glu298 each coordinate ATP. The region spanning 133 to 327 is the ATP-grasp 1 domain; the sequence is RNVMSRINGP…IAKVASKIAL (195 aa). Mg(2+) contacts are provided by Gln284, Glu298, and Asn300. 3 residues coordinate Mn(2+): Gln284, Glu298, and Asn300. The interval 402–549 is oligomerization domain; that stretch reads IGKYSLEHKK…YSTYDVYDEV (148 aa). The interval 550 to 932 is carbamoyl phosphate synthetic domain; that stretch reads EVSKNKKVIV…ALYKGFIGAN (383 aa). Positions 674–864 constitute an ATP-grasp 2 domain; the sequence is DELLEKLKIA…IVDIATRVML (191 aa). Positions 710, 749, 751, 755, 780, 781, 782, 783, 823, and 835 each coordinate ATP. Residues Gln823, Glu835, and Asn837 each coordinate Mg(2+). The Mn(2+) site is built by Gln823, Glu835, and Asn837. Residues 933–1068 form the MGS-like domain; the sequence is MSIKKEKGTV…ETLYIFDLSN (136 aa). Positions 933 to 1068 are allosteric domain; sequence MSIKKEKGTV…ETLYIFDLSN (136 aa).

The protein belongs to the CarB family. As to quaternary structure, composed of two chains; the small (or glutamine) chain promotes the hydrolysis of glutamine to ammonia, which is used by the large (or ammonia) chain to synthesize carbamoyl phosphate. Tetramer of heterodimers (alpha,beta)4. The cofactor is Mg(2+). Mn(2+) serves as cofactor.

The catalysed reaction is hydrogencarbonate + L-glutamine + 2 ATP + H2O = carbamoyl phosphate + L-glutamate + 2 ADP + phosphate + 2 H(+). It catalyses the reaction hydrogencarbonate + NH4(+) + 2 ATP = carbamoyl phosphate + 2 ADP + phosphate + 2 H(+). It participates in amino-acid biosynthesis; L-arginine biosynthesis; carbamoyl phosphate from bicarbonate: step 1/1. The protein operates within pyrimidine metabolism; UMP biosynthesis via de novo pathway; (S)-dihydroorotate from bicarbonate: step 1/3. Functionally, large subunit of the glutamine-dependent carbamoyl phosphate synthetase (CPSase). CPSase catalyzes the formation of carbamoyl phosphate from the ammonia moiety of glutamine, carbonate, and phosphate donated by ATP, constituting the first step of 2 biosynthetic pathways, one leading to arginine and/or urea and the other to pyrimidine nucleotides. The large subunit (synthetase) binds the substrates ammonia (free or transferred from glutamine from the small subunit), hydrogencarbonate and ATP and carries out an ATP-coupled ligase reaction, activating hydrogencarbonate by forming carboxy phosphate which reacts with ammonia to form carbamoyl phosphate. The polypeptide is Carbamoyl phosphate synthase large chain (Clostridium botulinum (strain Kyoto / Type A2)).